We begin with the raw amino-acid sequence, 81 residues long: U-poneritoxin(01)-Om2a (81 aa).

The first 25 residues, 1–25 (MKPSGITFAFLVVFMMAIMYNSVQA), serve as a signal peptide directing secretion. Residues 26-47 (AAIADADADAEAKAFADAFAEA) constitute a propeptide that is removed on maturation.

Belongs to the formicidae venom precursor-01 superfamily. Post-translationally, truncated sequences of this peptide have also been found in the venom. It is possible they have been cleaved in the venom. Expressed by the venom gland.

The protein resides in the secreted. Cationic amphipathic alpha-helical peptide with antimicrobial activities against E.coli (MIC=6.2 uM), S.aureus (MIC=6.2 uM), and S.cerevisiae (MIC=50 uM). Also shows histamine-releasing activity (30.1% at 10 uM) and a weak hemolytic activity (10.4% at 50 uM). The protein is U-poneritoxin(01)-Om2a of Odontomachus monticola (Trap-jaw ant).